A 744-amino-acid polypeptide reads, in one-letter code: Elongation factor G, mitochondrial (744 aa).

The transit peptide at Met-1–Phe-25 directs the protein to the mitochondrion. The 278-residue stretch at Glu-38 to Gly-315 folds into the tr-type G domain. Residues Ala-47–Thr-54, Asp-114–His-118, and Asn-168–Asp-171 contribute to the GTP site.

Belongs to the TRAFAC class translation factor GTPase superfamily. Classic translation factor GTPase family. EF-G/EF-2 subfamily.

The protein resides in the mitochondrion. It functions in the pathway protein biosynthesis; polypeptide chain elongation. Its function is as follows. Mitochondrial GTPase that catalyzes the GTP-dependent ribosomal translocation step during translation elongation. During this step, the ribosome changes from the pre-translocational (PRE) to the post-translocational (POST) state as the newly formed A-site-bound peptidyl-tRNA and P-site-bound deacylated tRNA move to the P and E sites, respectively. Catalyzes the coordinated movement of the two tRNA molecules, the mRNA and conformational changes in the ribosome. This chain is Elongation factor G, mitochondrial, found in Culex quinquefasciatus (Southern house mosquito).